We begin with the raw amino-acid sequence, 250 residues long: Small ribosomal subunit protein uS3 (250 aa).

The KH type-2 domain maps to 39–111; that stretch reads IRTLIKNHYP…KVQINIFEVK (73 aa).

This sequence belongs to the universal ribosomal protein uS3 family. In terms of assembly, part of the 30S ribosomal subunit. Forms a tight complex with proteins S10 and S14.

In terms of biological role, binds the lower part of the 30S subunit head. Binds mRNA in the 70S ribosome, positioning it for translation. In Phytoplasma vitis (Flavescence doree phytoplasma), this protein is Small ribosomal subunit protein uS3.